Reading from the N-terminus, the 366-residue chain is Proline-rich protein 19 (366 aa).

4 disordered regions span residues 1–53, 102–149, 256–286, and 301–338; these read MDPR…RDPC, ESHT…DLPV, TPAH…AAWG, and ATPP…WSPN. Residues 18 to 29 are compositionally biased toward basic residues; that stretch reads GRIRRRKTRRER. Composition is skewed to polar residues over residues 104–113 and 256–265; these read HTPQLPTKPS and TPAHRGSQVQ. Residues 275-286 are compositionally biased toward low complexity; sequence SSASSPSGAAWG. The segment covering 302-326 has biased composition (pro residues); sequence TPPPPPPQPWDVRPPQPLPQPPSPL.

Interacts with CNTD1. In terms of tissue distribution, preferentially expressed in gonads.

Its subcellular location is the nucleus. The protein resides in the chromosome. Promotes meiotic crossing over formation through its interaction with CNTD1 by participating in the crossover differentiation step of crossover-specific recombination intermediates. The protein is Proline-rich protein 19 of Mus musculus (Mouse).